Reading from the N-terminus, the 468-residue chain is Methionine aminopeptidase 2 (468 aa).

Over residues 1 to 10 (MGSKTFEGEG) the composition is skewed to basic and acidic residues. The tract at residues 1-106 (MGSKTFEGEG…PPRVPLDDLF (106 aa)) is disordered. Positions 16–25 (DPSNSTSPNS) are enriched in polar residues. Residues 31–40 (RGAHLSRDGD) are compositionally biased toward basic and acidic residues. The span at 46–56 (GDGDDGADGDE) shows a compositional bias: acidic residues. Over residues 61–75 (VTTTPLTEQQPSSET) the composition is skewed to polar residues. Basic residues predominate over residues 78 to 90 (KKKKRRKPKKKIS). His219 serves as a coordination point for substrate. Residues Asp240, Asp251, and His320 each coordinate a divalent metal cation. Position 328 (His328) interacts with substrate. The a divalent metal cation site is built by Glu353 and Glu449.

Belongs to the peptidase M24A family. Methionine aminopeptidase eukaryotic type 2 subfamily. Co(2+) is required as a cofactor. Requires Zn(2+) as cofactor. It depends on Mn(2+) as a cofactor. Fe(2+) serves as cofactor.

The protein localises to the cytoplasm. It carries out the reaction Release of N-terminal amino acids, preferentially methionine, from peptides and arylamides.. In terms of biological role, cotranslationally removes the N-terminal methionine from nascent proteins. The N-terminal methionine is often cleaved when the second residue in the primary sequence is small and uncharged (Met-Ala-, Cys, Gly, Pro, Ser, Thr, or Val). In Aspergillus oryzae (strain ATCC 42149 / RIB 40) (Yellow koji mold), this protein is Methionine aminopeptidase 2.